The chain runs to 109 residues: Protein ELF4-LIKE 3 (109 aa).

The segment at 88 to 109 is disordered; it reads SMEASSEGDSSEGRGNRRIRPA.

It belongs to the EARLY FLOWERING 4 family. As to quaternary structure, homodimer.

It localises to the nucleus. Its function is as follows. Component of the central CCA1/LHY-TOC1 feedback loop in the circadian clock that promotes clock accuracy and is required for sustained rhythms in the absence of daily light/dark cycles. In Arabidopsis thaliana (Mouse-ear cress), this protein is Protein ELF4-LIKE 3 (EFL3).